Here is a 680-residue protein sequence, read N- to C-terminus: GTPase Obg (680 aa).

Residues 2–160 (DQFIDVVSFE…LNIRLEVKLI (159 aa)) form the Obg domain. The region spanning 161-336 (ADIGLVGMPN…LDGDMLDKVT (176 aa)) is the OBG-type G domain. Residues 167–174 (GMPNTGKS), 192–196 (FTTLT), 214–217 (DIPG), 281–284 (NKTD), and 317–319 (PEI) each bind GTP. Residues Ser174 and Thr194 each coordinate Mg(2+). The segment at 371–680 (TKRVFGPVVS…NGVLSYAVNI (310 aa)) is radical SAM domain. Positions 383–613 (LGNSLGIDVI…IEIDVPSVSD (231 aa)) constitute a Radical SAM core domain. [4Fe-4S] cluster contacts are provided by Cys397, Cys401, and Cys404.

The protein belongs to the TRAFAC class OBG-HflX-like GTPase superfamily. OBG GTPase family. In terms of assembly, monomer. Mg(2+) is required as a cofactor. The cofactor is [4Fe-4S] cluster.

Its subcellular location is the cytoplasm. In terms of biological role, an essential GTPase which binds GTP, GDP and possibly (p)ppGpp with moderate affinity, with high nucleotide exchange rates and a fairly low GTP hydrolysis rate. Plays a role in control of the cell cycle, stress response, ribosome biogenesis and in those bacteria that undergo differentiation, in morphogenesis control. This chain is GTPase Obg, found in Brachyspira hyodysenteriae (strain ATCC 49526 / WA1).